Consider the following 191-residue polypeptide: MAP6 domain-containing protein 1 (191 aa).

3 S-palmitoyl cysteine lipidation sites follow: C5, C10, and C11. Residues 31-106 are disordered; that stretch reads HGYSDPGSEE…RGQSSAPPTR (76 aa). Phosphoserine occurs at positions 38 and 41. Mn regions lie at residues 123 to 136 and 158 to 170; these read TTSY…WTGV and DPSP…VPEV. S160 carries the phosphoserine modification.

This sequence belongs to the STOP family. Interacts with calmodulin. In terms of processing, palmitoylated. Palmitoylation enhances association with microtubules. In terms of tissue distribution, expressed in brain. Found in neurons in primary cultures, but absent in glial cells.

It is found in the golgi apparatus. Its subcellular location is the cytoplasm. It localises to the cytoskeleton. In terms of biological role, may have microtubule-stabilizing activity. The protein is MAP6 domain-containing protein 1 (Map6d1) of Mus musculus (Mouse).